An 87-amino-acid polypeptide reads, in one-letter code: Kappa-6-bungarotoxin (87 aa).

The signal sequence occupies residues 1–21 (MKTLLLSLVVVTIVCLDLGYT). Disulfide bonds link C24-C42, C35-C63, C48-C52, C67-C79, and C80-C85.

Belongs to the three-finger toxin family. Long-chain subfamily. Kappa-neurotoxin sub-subfamily. As to quaternary structure, homo- and heterodimer; non-covalently linked. In terms of tissue distribution, expressed by the venom gland.

The protein resides in the secreted. In terms of biological role, postsynaptic neurotoxin that binds and inhibits neuronal nicotinic acetylcholine receptors (nAChR) with high affinity (IC(50)&lt;100 nM). Is a selective, and slowly reversible antagonist of alpha-3/CHRNA3-containing and some alpha-4/CHRNA4-containing AChRs. This is Kappa-6-bungarotoxin from Bungarus multicinctus (Many-banded krait).